We begin with the raw amino-acid sequence, 146 residues long: Putative calcium-binding protein CML19 (146 aa).

4 consecutive EF-hand domains span residues 3–38 (AATAEFRRVFSAFDRDADGKISAAELRLCMKAALGE), 40–75 (MSAEEAEALVSSADTDDDGLLDEEEFTKLAVQLEMG), 79–114 (ERCRGLMEAFRMYEMEGEGRITPASLKRMLSKLGSH), and 115–146 (QGIEECQTMICRFDLDGDGVISFEEFKIMMDA). Ca(2+) contacts are provided by D16, D18, D20, K22, E27, D53, D55, D57, and E64. Residues D128, D130, D132, and E139 each coordinate Ca(2+).

Functionally, potential calcium sensor. The polypeptide is Putative calcium-binding protein CML19 (CML19) (Oryza sativa subsp. japonica (Rice)).